Consider the following 539-residue polypeptide: 3-methylmercaptopropionyl-CoA ligase (539 aa).

A Mg(2+)-binding site is contributed by T185. ATP-binding residues include H231, G303, H324, A325, and S329. E330 serves as a coordination point for Mg(2+). 4 residues coordinate ATP: Q359, D417, R432, and K523.

This sequence belongs to the ATP-dependent AMP-binding enzyme family. Homodimer. It depends on Mg(2+) as a cofactor.

It carries out the reaction 3-(methylsulfanyl)propanoate + ATP + CoA = 3-(methylsulfanyl)propanoyl-CoA + AMP + diphosphate. ADP acts as a competitive inhibitor and inhibits the ligase activity. Its function is as follows. Involved in the assimilation of dimethylsulphoniopropionate (DMSP), an important compound in the fixation of carbon in marine phytoplankton. Catalyzes the ATP-dependent ligation of methylmercaptopropionate (MMPA) and CoA to yield methylmercaptopropionate-CoA (MMPA-CoA). This is 3-methylmercaptopropionyl-CoA ligase from Ruegeria lacuscaerulensis (strain DSM 11314 / KCTC 2953 / ITI-1157) (Silicibacter lacuscaerulensis).